The chain runs to 449 residues: C4-dicarboxylate transport protein (449 aa).

Transmembrane regions (helical) follow at residues 20–42 (YLQL…HCYP), 62–84 (IISP…VGTV), 91–113 (AMVY…AHVV), 164–181 (ILQV…LALA), 202–224 (LVQM…TIGK), 239–261 (SFYL…FSGF), 344–366 (LALF…AGFI), and 370–389 (ATLT…ILGV).

It belongs to the dicarboxylate/amino acid:cation symporter (DAACS) (TC 2.A.23) family.

The protein resides in the cell inner membrane. Functionally, responsible for the transport of dicarboxylates such as succinate, fumarate, and malate from the periplasm across the inner membrane. This is C4-dicarboxylate transport protein (dctA) from Xylella fastidiosa (strain 9a5c).